A 1193-amino-acid chain; its full sequence is Sperm-associated antigen 5 (1193 aa).

Residues 1-48 (MWRVKKLSLSLSPSPQTGKPSMRTPLRELTLQPGALTNSGKRSPACSS) form a disordered region. Residues serine 12, serine 14, serine 43, serine 62, and serine 66 each carry the phosphoserine modification. Over residues 35 to 48 (ALTNSGKRSPACSS) the composition is skewed to polar residues. Residues 96–117 (ESDEQPLDPIPQISSTPKTSEE) are disordered. Threonine 111 carries the phosphothreonine; by GSK3-beta modification. Serine 135, serine 159, and serine 334 each carry phosphoserine. Threonine 336 carries the post-translational modification Phosphothreonine. Phosphoserine is present on residues serine 341, serine 353, and serine 362. Over residues 390–405 (PSAPQEKSTNTSQTGL) the composition is skewed to polar residues. Residues 390–416 (PSAPQEKSTNTSQTGLVGTKHSTSETE) form a disordered region. The interval 482–850 (NKLQHLKESH…LKDTVENLTA (369 aa)) is interaction with KNSTRN. 2 coiled-coil regions span residues 545-608 (CCFD…SMRE) and 759-868 (QLTQ…EKTR). Threonine 937 bears the Phosphothreonine; by GSK3-beta mark. Residue serine 974 is modified to Phosphoserine; by GSK3-beta. At threonine 978 the chain carries Phosphothreonine; by GSK3-beta. Residues 979 to 1174 (ELQSLCSLLQ…VQHIYKTLLS (196 aa)) are a coiled coil.

As to quaternary structure, homodimer, with a globular head domain and a long stalk. Homooligomer; the globular head domains associate, resulting in aster-like structures. Binds to microtubules in the mitotic spindle. Interacts with DCLRE1B/Apollo. Part of an astrin (SPAG5)-kinastrin (SKAP) complex containing KNSTRN, SPAG5, PLK1, DYNLL1 and SGO2. Interacts with KNSTRN. Interacts with RPTOR; this interaction competes with RPTOR binding to MTOR, resulting in decreased mTORC1 formation. Interacts with G3BP1. The complex formed with G3BP1 AND RPTOR is increased by oxidative stress. Interacts with OSBPL8, PCM1 and CDK5RAP2. Interacts (via C-terminus) with NUMA1 (via C-terminus); this interaction promotes the recruitment of SPAG5 to the microtubules at spindle poles in a dynein-dynactin-dependent manner. Interacts with DYNLL1. Phosphorylated by AURKA. In terms of tissue distribution, highly expressed in testis. Detected at low levels in placenta, liver, pancreas, thymus and colon.

It localises to the cytoplasm. It is found in the cytoskeleton. The protein resides in the spindle. Its subcellular location is the spindle pole. The protein localises to the chromosome. It localises to the centromere. It is found in the kinetochore. The protein resides in the midbody. Its subcellular location is the microtubule organizing center. The protein localises to the centrosome. It localises to the cytoplasmic granule. It is found in the centriolar satellite. In terms of biological role, essential component of the mitotic spindle required for normal chromosome segregation and progression into anaphase. Required for chromosome alignment, normal timing of sister chromatid segregation, and maintenance of spindle pole architecture. In complex with SKAP, promotes stable microtubule-kinetochore attachments. May contribute to the regulation of separase activity. May regulate AURKA localization to mitotic spindle, but not to centrosomes and CCNB1 localization to both mitotic spindle and centrosomes. Involved in centriole duplication. Required for CDK5RAP2, CEP152, WDR62 and CEP63 centrosomal localization and promotes the centrosomal localization of CDK2. In non-mitotic cells, upon stress induction, inhibits mammalian target of rapamycin complex 1 (mTORC1) association and recruits the mTORC1 component RPTOR to stress granules (SGs), thereby preventing mTORC1 hyperactivation-induced apoptosis. May enhance GSK3B-mediated phosphorylation of other substrates, such as MAPT/TAU. This Homo sapiens (Human) protein is Sperm-associated antigen 5 (SPAG5).